Consider the following 152-residue polypeptide: Large ribosomal subunit protein bL9 (152 aa).

It belongs to the bacterial ribosomal protein bL9 family.

Binds to the 23S rRNA. This is Large ribosomal subunit protein bL9 from Corynebacterium urealyticum (strain ATCC 43042 / DSM 7109).